Here is a 291-residue protein sequence, read N- to C-terminus: N-acetylmannosamine kinase (291 aa).

Residues 5–12 (AIDIGGTK) and 132–139 (GVGGGVVC) contribute to the ATP site. Zn(2+) is bound by residues histidine 156, cysteine 166, cysteine 168, and cysteine 173.

Belongs to the ROK (NagC/XylR) family. NanK subfamily. In terms of assembly, homodimer.

The catalysed reaction is an N-acyl-D-mannosamine + ATP = an N-acyl-D-mannosamine 6-phosphate + ADP + H(+). Its pathway is amino-sugar metabolism; N-acetylneuraminate degradation; D-fructose 6-phosphate from N-acetylneuraminate: step 2/5. Functionally, catalyzes the phosphorylation of N-acetylmannosamine (ManNAc) to ManNAc-6-P. The sequence is that of N-acetylmannosamine kinase from Salmonella typhi.